A 155-amino-acid polypeptide reads, in one-letter code: 2-C-methyl-D-erythritol 2,4-cyclodiphosphate synthase (155 aa).

The a divalent metal cation site is built by D8 and H10. Residues 8–10 (DVH) and 34–35 (HS) each bind 4-CDP-2-C-methyl-D-erythritol 2-phosphate. An a divalent metal cation-binding site is contributed by H42. 4-CDP-2-C-methyl-D-erythritol 2-phosphate-binding positions include 56–58 (DIG), 61–65 (FPDKD), 132–135 (TTTE), and R142.

Belongs to the IspF family. As to quaternary structure, homotrimer. A divalent metal cation serves as cofactor.

The enzyme catalyses 4-CDP-2-C-methyl-D-erythritol 2-phosphate = 2-C-methyl-D-erythritol 2,4-cyclic diphosphate + CMP. It participates in isoprenoid biosynthesis; isopentenyl diphosphate biosynthesis via DXP pathway; isopentenyl diphosphate from 1-deoxy-D-xylulose 5-phosphate: step 4/6. Involved in the biosynthesis of isopentenyl diphosphate (IPP) and dimethylallyl diphosphate (DMAPP), two major building blocks of isoprenoid compounds. Catalyzes the conversion of 4-diphosphocytidyl-2-C-methyl-D-erythritol 2-phosphate (CDP-ME2P) to 2-C-methyl-D-erythritol 2,4-cyclodiphosphate (ME-CPP) with a corresponding release of cytidine 5-monophosphate (CMP). The chain is 2-C-methyl-D-erythritol 2,4-cyclodiphosphate synthase from Desulfatibacillum aliphaticivorans.